The chain runs to 212 residues: Pyridoxine/pyridoxamine 5'-phosphate oxidase (212 aa).

Substrate is bound by residues 8–11 (RREY) and Lys66. Residues 61–66 (RIVLLK), 76–77 (FT), Arg82, Lys83, and Gln105 each bind FMN. Substrate contacts are provided by Tyr123, Arg127, and Ser131. FMN is bound by residues 140–141 (QS) and Trp185. 191–193 (RLH) serves as a coordination point for substrate. Arg195 contributes to the FMN binding site.

It belongs to the pyridoxamine 5'-phosphate oxidase family. Homodimer. Requires FMN as cofactor.

The enzyme catalyses pyridoxamine 5'-phosphate + O2 + H2O = pyridoxal 5'-phosphate + H2O2 + NH4(+). It carries out the reaction pyridoxine 5'-phosphate + O2 = pyridoxal 5'-phosphate + H2O2. It functions in the pathway cofactor metabolism; pyridoxal 5'-phosphate salvage; pyridoxal 5'-phosphate from pyridoxamine 5'-phosphate: step 1/1. Its pathway is cofactor metabolism; pyridoxal 5'-phosphate salvage; pyridoxal 5'-phosphate from pyridoxine 5'-phosphate: step 1/1. Catalyzes the oxidation of either pyridoxine 5'-phosphate (PNP) or pyridoxamine 5'-phosphate (PMP) into pyridoxal 5'-phosphate (PLP). This Shewanella denitrificans (strain OS217 / ATCC BAA-1090 / DSM 15013) protein is Pyridoxine/pyridoxamine 5'-phosphate oxidase.